The sequence spans 349 residues: MNRKETRKVKVGNIYVGGDFRVSIQSMTNTDTKDVESTVKQIKELQEAGCDIVRCAVLDMDAACAIKDIVAKINIPLVADIHFDYRLALKAIENGVSAIRINPGNIGSREKVEAVVKACKEKNIPIRIGVNSGSLSKELLTKYGKPTPDALVESALEHVKILEELDFHDIVISMKSSNVETMIESYRIASQKTNYPLHLGVTEAGTPWRGTIKSAIGIGTLLAEGIGDTIRVSLTGDPVEEIKVGKEILKNFGYVKEGIEFISCPTCGRTQIDLINIAKEVEERLSSCKKNIKVAVMGCVVNGPGEAREADIGIAGGKGEGLIFRKGEIIKKVKEEDLVEELIKIIETI.

Positions 264, 267, 299, and 306 each coordinate [4Fe-4S] cluster.

Belongs to the IspG family. Requires [4Fe-4S] cluster as cofactor.

It carries out the reaction (2E)-4-hydroxy-3-methylbut-2-enyl diphosphate + oxidized [flavodoxin] + H2O + 2 H(+) = 2-C-methyl-D-erythritol 2,4-cyclic diphosphate + reduced [flavodoxin]. Its pathway is isoprenoid biosynthesis; isopentenyl diphosphate biosynthesis via DXP pathway; isopentenyl diphosphate from 1-deoxy-D-xylulose 5-phosphate: step 5/6. Functionally, converts 2C-methyl-D-erythritol 2,4-cyclodiphosphate (ME-2,4cPP) into 1-hydroxy-2-methyl-2-(E)-butenyl 4-diphosphate. The polypeptide is 4-hydroxy-3-methylbut-2-en-1-yl diphosphate synthase (flavodoxin) (Clostridium perfringens (strain 13 / Type A)).